Here is a 369-residue protein sequence, read N- to C-terminus: Cobalt-precorrin-5B C(1)-methyltransferase (369 aa).

This sequence belongs to the CbiD family.

The catalysed reaction is Co-precorrin-5B + S-adenosyl-L-methionine = Co-precorrin-6A + S-adenosyl-L-homocysteine. It participates in cofactor biosynthesis; adenosylcobalamin biosynthesis; cob(II)yrinate a,c-diamide from sirohydrochlorin (anaerobic route): step 6/10. Its function is as follows. Catalyzes the methylation of C-1 in cobalt-precorrin-5B to form cobalt-precorrin-6A. This Leptospira borgpetersenii serovar Hardjo-bovis (strain JB197) protein is Cobalt-precorrin-5B C(1)-methyltransferase.